We begin with the raw amino-acid sequence, 1007 residues long: Sal-like protein 2 (1007 aa).

Positions methionine 1–proline 33 are disordered. The C2H2-type 1; atypical zinc-finger motif lies at glutamine 34–cysteine 56. Disordered regions lie at residues aspartate 59–serine 121, glycine 137–leucine 177, proline 220–serine 243, and proline 286–leucine 306. Residues glutamate 70–glutamate 80 are compositionally biased toward low complexity. The segment covering proline 99–threonine 108 has biased composition (polar residues). Residues proline 151–glycine 171 show a composition bias toward pro residues. A Phosphoserine modification is found at serine 243. 2 C2H2-type zinc fingers span residues histidine 373 to histidine 395 and tyrosine 401 to histidine 423. Disordered stretches follow at residues lysine 520–alanine 540 and alanine 610–glycine 629. 3 consecutive C2H2-type zinc fingers follow at residues asparagine 631–histidine 653, phenylalanine 659–histidine 681, and asparagine 691–histidine 713. A disordered region spans residues leucine 714–threonine 886. Residues glutamate 734–glycine 744 show a composition bias toward polar residues. Residues serine 747 to serine 757 show a composition bias toward low complexity. Residues proline 758 to serine 782 are compositionally biased toward acidic residues. Serine 797, serine 802, and serine 806 each carry phosphoserine. Positions glutamate 803–valine 812 are enriched in acidic residues. Residues glycine 862–arginine 871 are compositionally biased toward basic and acidic residues. Residue lysine 911 forms a Glycyl lysine isopeptide (Lys-Gly) (interchain with G-Cter in ubiquitin) linkage. 2 consecutive C2H2-type zinc fingers follow at residues lysine 911–histidine 933 and phenylalanine 940–histidine 963.

The protein belongs to the sal C2H2-type zinc-finger protein family. Highest levels in adult brain (in different areas). Lower levels in heart; very low levels in kidney and pancreas. Expressed throughout the retina and lens vesicle as well as the periocular mesenchyme.

It is found in the nucleus. Its function is as follows. Probable transcription factor that plays a role in eye development before, during, and after optic fissure closure. This chain is Sal-like protein 2 (SALL2), found in Homo sapiens (Human).